The primary structure comprises 120 residues: Large ribosomal subunit protein bL19 (120 aa).

Belongs to the bacterial ribosomal protein bL19 family.

In terms of biological role, this protein is located at the 30S-50S ribosomal subunit interface and may play a role in the structure and function of the aminoacyl-tRNA binding site. This is Large ribosomal subunit protein bL19 from Nostoc punctiforme (strain ATCC 29133 / PCC 73102).